A 254-amino-acid polypeptide reads, in one-letter code: MLAKRIIPCLDVDNGRVVKGKKFLDIQDVADPVELAKRYNDEGADELVFYDITASNEQRGIFLDVVEKVAKEIAIPFMVGGGIRTTKDIHQVLRSGADKVSINSAAVQRPELIFESAQKFGSQCTVLSIDAKEIAVGKWNVFINGGRKDTGIDAIEWAKKGESYGAGEIVVNAMDADGEKNGYNLPLTTAIATAVNIPVIASGGAGNIQHFKDVLSHEIDAALAASVFHYDEIKIPALKTYLNEQEISVRRNSK.

Active-site residues include Asp-11 and Asp-130.

This sequence belongs to the HisA/HisF family. As to quaternary structure, heterodimer of HisH and HisF.

The protein localises to the cytoplasm. It carries out the reaction 5-[(5-phospho-1-deoxy-D-ribulos-1-ylimino)methylamino]-1-(5-phospho-beta-D-ribosyl)imidazole-4-carboxamide + L-glutamine = D-erythro-1-(imidazol-4-yl)glycerol 3-phosphate + 5-amino-1-(5-phospho-beta-D-ribosyl)imidazole-4-carboxamide + L-glutamate + H(+). The protein operates within amino-acid biosynthesis; L-histidine biosynthesis; L-histidine from 5-phospho-alpha-D-ribose 1-diphosphate: step 5/9. Functionally, IGPS catalyzes the conversion of PRFAR and glutamine to IGP, AICAR and glutamate. The HisF subunit catalyzes the cyclization activity that produces IGP and AICAR from PRFAR using the ammonia provided by the HisH subunit. The sequence is that of Imidazole glycerol phosphate synthase subunit HisF from Oceanobacillus iheyensis (strain DSM 14371 / CIP 107618 / JCM 11309 / KCTC 3954 / HTE831).